Consider the following 20-residue polypeptide: Dentinal fluid transport-stimulating peptide (20 aa).

The interval Gly-1 to Gly-20 is disordered. The segment covering Gln-8 to Gly-20 has biased composition (basic and acidic residues).

This peptide stimulates the transport of dentinal fluid, which is important for the prevention of dental caries. The protein is Dentinal fluid transport-stimulating peptide of Rattus norvegicus (Rat).